The sequence spans 249 residues: ATP synthase subunit a, chloroplastic (249 aa).

5 consecutive transmembrane segments (helical) span residues 40-60, 97-117, 136-156, 201-221, and 222-242; these read QVLI…VLAV, VPFI…GALL, INTT…AGLS, LVVV…VMFL, and GLFT…AYIG.

The protein belongs to the ATPase A chain family. In terms of assembly, F-type ATPases have 2 components, CF(1) - the catalytic core - and CF(0) - the membrane proton channel. CF(1) has five subunits: alpha(3), beta(3), gamma(1), delta(1), epsilon(1). CF(0) has four main subunits: a, b, b' and c.

The protein localises to the plastid. It localises to the chloroplast thylakoid membrane. In terms of biological role, key component of the proton channel; it plays a direct role in the translocation of protons across the membrane. In Arabis hirsuta (Hairy rock-cress), this protein is ATP synthase subunit a, chloroplastic.